Consider the following 223-residue polypeptide: Peroxynitrite isomerase 1 (223 aa).

The GXWXGXG motif lies at 69-75 (GVWRGEG). Residues Lys-186 and His-213 each coordinate heme b.

Belongs to the nitrobindin family. In terms of assembly, homodimer. It depends on heme b as a cofactor.

It catalyses the reaction peroxynitrite = nitrate. The protein operates within nitrogen metabolism. In terms of biological role, heme-binding protein able to scavenge peroxynitrite and to protect free L-tyrosine against peroxynitrite-mediated nitration, by acting as a peroxynitrite isomerase that converts peroxynitrite to nitrate. Therefore, this protein likely plays a role in peroxynitrite sensing and in the detoxification of reactive nitrogen and oxygen species (RNS and ROS, respectively). Is able to bind nitric oxide (NO) in vitro, but may act as a sensor of peroxynitrite levels in vivo. This is Peroxynitrite isomerase 1 from Mycobacterium marinum (strain ATCC BAA-535 / M).